We begin with the raw amino-acid sequence, 429 residues long: Alanine aminotransferase (429 aa).

Residues Gly-65 and Asn-204 each coordinate L-alanine. The residue at position 265 (Lys-265) is an N6-(pyridoxal phosphate)lysine. Residue Arg-403 participates in L-alanine binding.

This sequence belongs to the class-I pyridoxal-phosphate-dependent aminotransferase family. As to quaternary structure, homodimer. It depends on pyridoxal 5'-phosphate as a cofactor.

It is found in the cytoplasm. It carries out the reaction L-alanine + 2-oxoglutarate = pyruvate + L-glutamate. The sequence is that of Alanine aminotransferase (aspC) from Mycobacterium bovis (strain ATCC BAA-935 / AF2122/97).